Reading from the N-terminus, the 382-residue chain is Na(+)/H(+) antiporter NhaA 2 (382 aa).

Transmembrane regions (helical) follow at residues 8 to 28 (FFSS…AAII), 49 to 69 (LSVE…MVGL), 87 to 107 (ALPG…YVWF), 115 to 135 (LAGW…VLAL), 146 to 166 (IFLS…IALF), 169 to 189 (SNIS…LFIM), 209 to 229 (FFML…ALFI), 252 to 272 (WVTF…ALSG), 286 to 306 (VALG…LLAV), 325 to 345 (VSVL…LAFA), and 353 to 373 (EVKV…MLIL).

Belongs to the NhaA Na(+)/H(+) (TC 2.A.33) antiporter family.

The protein resides in the cell inner membrane. It catalyses the reaction Na(+)(in) + 2 H(+)(out) = Na(+)(out) + 2 H(+)(in). Functionally, na(+)/H(+) antiporter that extrudes sodium in exchange for external protons. In Klebsiella pneumoniae subsp. pneumoniae (strain ATCC 700721 / MGH 78578), this protein is Na(+)/H(+) antiporter NhaA 2.